Reading from the N-terminus, the 96-residue chain is Ferredoxin-1 (96 aa).

The 95-residue stretch at 1–95 folds into the 2Fe-2S ferredoxin-type domain; that stretch reads MKVIINGKEF…DCDEIVIESE (95 aa). [2Fe-2S] cluster is bound by residues Cys34, Cys39, Cys42, and Cys78. The cysteines at positions 52 and 87 are disulfide-linked.

The protein belongs to the 2Fe2S plant-type ferredoxin family. The cofactor is [2Fe-2S] cluster.

Its function is as follows. Ferredoxins are iron-sulfur proteins that transfer electrons in a wide variety of metabolic reactions. The polypeptide is Ferredoxin-1 (fdx1) (Aquifex aeolicus (strain VF5)).